Here is a 320-residue protein sequence, read N- to C-terminus: Methylenetetrahydrofolate dehydrogenase [NAD(+)] (320 aa).

Residue cysteine 152 is part of the active site. NAD(+)-binding positions include 187–188 (RS) and 210–211 (DI).

Belongs to the tetrahydrofolate dehydrogenase/cyclohydrolase family. Homodimer.

The protein resides in the cytoplasm. It is found in the nucleus. The catalysed reaction is (6R)-5,10-methylene-5,6,7,8-tetrahydrofolate + NAD(+) = (6R)-5,10-methenyltetrahydrofolate + NADH. It functions in the pathway one-carbon metabolism; tetrahydrofolate interconversion. In terms of biological role, catalyzes oxidation of cytoplasmic one-carbon units for purine biosynthesis. The chain is Methylenetetrahydrofolate dehydrogenase [NAD(+)] (mtd1) from Schizosaccharomyces pombe (strain 972 / ATCC 24843) (Fission yeast).